Here is a 191-residue protein sequence, read N- to C-terminus: Casparian strip membrane protein 4 (191 aa).

At 1–27 the chain is on the cytoplasmic side; that stretch reads MKTGSVEAGEQASEDATPRRGKKLNRG. A helical transmembrane segment spans residues 28 to 48; the sequence is ILILDLVLRVFGAICTLGSAV. Residues 49–72 lie on the Extracellular side of the membrane; that stretch reads AMGTTSQTLPSSSQFFRFRAKYND. A helical membrane pass occupies residues 73–93; sequence LPMFMFFAIANSIVCAYLVLS. The Cytoplasmic segment spans residues 94-110; sequence LRLSIFHIIRSAGIITR. The helical transmembrane segment at 111-131 threads the bilayer; that stretch reads IILVTFDMVMLVLLTCGASAA. The Extracellular portion of the chain corresponds to 132-160; sequence TSIVYLAHKGNASANWLPFCVRFSHFCNR. A glycan (N-linked (GlcNAc...) asparagine) is linked at N142. The chain crosses the membrane as a helical span at residues 161–181; sequence ISGSLIGSFFSIIIFMLLVIL. The Cytoplasmic portion of the chain corresponds to 182–191; sequence SAVSQFSICN.

The protein belongs to the Casparian strip membrane proteins (CASP) family. Homodimer and heterodimers.

Its subcellular location is the cell membrane. Its function is as follows. Regulates membrane-cell wall junctions and localized cell wall deposition. Required for establishment of the Casparian strip membrane domain (CSD) and the subsequent formation of Casparian strips, a cell wall modification of the root endodermis that determines an apoplastic barrier between the intraorganismal apoplasm and the extraorganismal apoplasm and prevents lateral diffusion. The sequence is that of Casparian strip membrane protein 4 from Ricinus communis (Castor bean).